A 453-amino-acid chain; its full sequence is Tol-Pal system protein TolB (453 aa).

The first 39 residues, 1 to 39, serve as a signal peptide directing secretion; it reads MSFIPNTEAEALSALFSRRSVLGATAAGGLLATPLAAFA.

The protein belongs to the TolB family. As to quaternary structure, the Tol-Pal system is composed of five core proteins: the inner membrane proteins TolA, TolQ and TolR, the periplasmic protein TolB and the outer membrane protein Pal. They form a network linking the inner and outer membranes and the peptidoglycan layer.

The protein resides in the periplasm. Part of the Tol-Pal system, which plays a role in outer membrane invagination during cell division and is important for maintaining outer membrane integrity. This Gluconobacter oxydans (strain 621H) (Gluconobacter suboxydans) protein is Tol-Pal system protein TolB.